The following is a 423-amino-acid chain: Glutamate-1-semialdehyde 2,1-aminomutase (423 aa).

An N6-(pyridoxal phosphate)lysine modification is found at lysine 266.

Belongs to the class-III pyridoxal-phosphate-dependent aminotransferase family. HemL subfamily. As to quaternary structure, homodimer. It depends on pyridoxal 5'-phosphate as a cofactor.

It is found in the cytoplasm. The enzyme catalyses (S)-4-amino-5-oxopentanoate = 5-aminolevulinate. It functions in the pathway porphyrin-containing compound metabolism; protoporphyrin-IX biosynthesis; 5-aminolevulinate from L-glutamyl-tRNA(Glu): step 2/2. The sequence is that of Glutamate-1-semialdehyde 2,1-aminomutase from Desulfovibrio desulfuricans (strain ATCC 27774 / DSM 6949 / MB).